Reading from the N-terminus, the 359-residue chain is Fructose-bisphosphate aldolase (359 aa).

Ser-50 contacts D-glyceraldehyde 3-phosphate. The Proton donor role is filled by Asp-83. Residues His-84, Asp-105, Glu-142, and His-198 each contribute to the Zn(2+) site. Residue Gly-199 participates in dihydroxyacetone phosphate binding. His-232 provides a ligand contact to Zn(2+). Dihydroxyacetone phosphate-binding positions include 233 to 235 (GSS) and 275 to 278 (NIDT).

Requires Zn(2+) as cofactor.

It catalyses the reaction beta-D-fructose 1,6-bisphosphate = D-glyceraldehyde 3-phosphate + dihydroxyacetone phosphate. It functions in the pathway carbohydrate degradation; glycolysis; D-glyceraldehyde 3-phosphate and glycerone phosphate from D-glucose: step 4/4. Catalyzes the aldol condensation of dihydroxyacetone phosphate (DHAP or glycerone-phosphate) with glyceraldehyde 3-phosphate (G3P) to form fructose 1,6-bisphosphate (FBP) in gluconeogenesis and the reverse reaction in glycolysis. This is Fructose-bisphosphate aldolase from Nostoc sp. (strain PCC 7120 / SAG 25.82 / UTEX 2576).